Reading from the N-terminus, the 130-residue chain is U-scoloptoxin(17)-Er1a (130 aa).

A signal peptide spans 1–18; that stretch reads MKLLVFALFLQVVQLSLA.

The protein belongs to the scoloptoxin-17 family. Post-translationally, contains 4 disulfide bonds. Expressed by the venom gland.

It is found in the secreted. This chain is U-scoloptoxin(17)-Er1a, found in Ethmostigmus rubripes (Giant centipede).